The primary structure comprises 560 residues: Synaptotagmin-5 (560 aa).

The chain crosses the membrane as a helical span at residues 2 to 22 (GFIVGVVIGLLVGIAIIIGFV). The SMP-LTD domain maps to 67–249 (ERQKLTWLNH…WPVRKVIPII (183 aa)). The phospholipid binding stretch occupies residues 227 to 523 (EETIRDAVED…YIGRCILTLT (297 aa)). C2 domains follow at residues 243–364 (RKVI…DVWL) and 417–535 (TTDE…KDWY). Ca(2+)-binding residues include Asp-278, Asp-284, Asp-334, Glu-336, Asp-451, Asp-457, Asp-506, Asp-508, and Asp-513.

Belongs to the synaptotagmin family. The cofactor is Ca(2+).

Its subcellular location is the membrane. Its function is as follows. May be involved in membrane trafficking. The sequence is that of Synaptotagmin-5 (SYT5) from Arabidopsis thaliana (Mouse-ear cress).